A 146-amino-acid polypeptide reads, in one-letter code: Transcription antitermination protein NusB (146 aa).

It belongs to the NusB family.

Its function is as follows. Involved in transcription antitermination. Required for transcription of ribosomal RNA (rRNA) genes. Binds specifically to the boxA antiterminator sequence of the ribosomal RNA (rrn) operons. The polypeptide is Transcription antitermination protein NusB (Solibacter usitatus (strain Ellin6076)).